The following is a 107-amino-acid chain: Ribonuclease P protein component 4 (107 aa).

4 residues coordinate Zn(2+): C66, C69, C92, and C95.

The protein belongs to the eukaryotic/archaeal RNase P protein component 4 family. In terms of assembly, consists of a catalytic RNA component and at least 4-5 protein subunits. The cofactor is Zn(2+).

It localises to the cytoplasm. The catalysed reaction is Endonucleolytic cleavage of RNA, removing 5'-extranucleotides from tRNA precursor.. In terms of biological role, part of ribonuclease P, a protein complex that generates mature tRNA molecules by cleaving their 5'-ends. This Methanosarcina barkeri (strain Fusaro / DSM 804) protein is Ribonuclease P protein component 4.